The chain runs to 536 residues: Apolipoprotein N-acyltransferase (536 aa).

Transmembrane regions (helical) follow at residues 34–54 (PLWW…RPGA), 64–84 (ALIG…WLFI), 89–109 (YGAL…AFLA), 129–149 (GAAL…GSLW), 172–192 (YVGV…CVQW), and 199–219 (HWPM…AAVQ). One can recognise a CN hydrolase domain in the interval 244-487 (LQGNIAQDEK…RGVLRGQVHG (244 aa)). The active-site Proton acceptor is E283. K345 is an active-site residue. C395 acts as the Nucleophile in catalysis. The chain crosses the membrane as a helical span at residues 503–523 (WWVARWGLWPLWALAALALAW).

This sequence belongs to the CN hydrolase family. Apolipoprotein N-acyltransferase subfamily.

It localises to the cell inner membrane. It carries out the reaction N-terminal S-1,2-diacyl-sn-glyceryl-L-cysteinyl-[lipoprotein] + a glycerophospholipid = N-acyl-S-1,2-diacyl-sn-glyceryl-L-cysteinyl-[lipoprotein] + a 2-acyl-sn-glycero-3-phospholipid + H(+). It participates in protein modification; lipoprotein biosynthesis (N-acyl transfer). Functionally, catalyzes the phospholipid dependent N-acylation of the N-terminal cysteine of apolipoprotein, the last step in lipoprotein maturation. The protein is Apolipoprotein N-acyltransferase of Verminephrobacter eiseniae (strain EF01-2).